Reading from the N-terminus, the 446-residue chain is Nuclear envelope morphology protein 1 (446 aa).

Residues 53–80 (VDQQYDHSSSHLKESDQNQERKNSVPKK) are disordered. The segment covering 56–75 (QYDHSSSHLKESDQNQERKN) has biased composition (basic and acidic residues). A helical transmembrane segment spans residues 87-103 (ILIEKIASILWALLLFL). Residues 132 to 168 (HTDKRNRGSNASENELPVSSSNINDSSEKTNPKNCNL) form a disordered region. Over residues 139 to 156 (GSNASENELPVSSSNIND) the composition is skewed to polar residues. An FCP1 homology domain is found at 247 to 424 (NTQKKKKLVI…LNLLPFLEAM (178 aa)).

It belongs to the Dullard family. As to quaternary structure, component of the NEM1-SPO7 complex.

The protein resides in the endoplasmic reticulum membrane. The protein localises to the nucleus membrane. The catalysed reaction is O-phospho-L-seryl-[protein] + H2O = L-seryl-[protein] + phosphate. The enzyme catalyses O-phospho-L-threonyl-[protein] + H2O = L-threonyl-[protein] + phosphate. Its function is as follows. Catalytic component of the NEM1-SPO7 complex which acts as a phosphatase and dephosphorylates the phosphatidic acid phosphohydrolase PAH1. Essential for the formation of a spherical nucleus and meiotic division. The NEM1-SPOo7 protein phosphatase is required for efficient mitophagy under prolonged respiration, as well as for reticulophagy and pexophagy. The protein is Nuclear envelope morphology protein 1 (NEM1) of Saccharomyces cerevisiae (strain ATCC 204508 / S288c) (Baker's yeast).